The chain runs to 455 residues: MALPNKFLLWFYCFAWLCFPVSLGSQASGGDAQIAASAELESGATPWSLLQPIDERDRAGLLPPLFKVLSVGRGGAPRLQPDSRALHYMKNLYKTYATKEGIPKSNRSHLYNTVRLFTPCTQHKQVPGDQVTGILPSVDLLFNLDRITTVEHLLKSVLLYTINNSVSFSSAVKCVCNLMIKEPKFSSKTLHRALYSFTFNSQFEFGKKHKWIEIDVTSLLQPLVASNKRSIHMSINFTCMKDQLEHPSAQNGLFNMTLLVPPSLILYLNDTSAQAYHRWYSLYYKRRPSQGPDQERSLSAYPVGEDAAEDGRSSHHRHRRGQETVSSELKKPLVPASFNLSEYFKQFLFPQNECELHDFRLSFSQLKWDNWIVAPHRYNPRYCKGDCPRAVGHRYGSPVHTMVQNIIYEKLDSSVPRPSCVPAKYSPLSVLTIEPDGSIAYKEYEDMIATKCTCR.

The first 24 residues, 1–24 (MALPNKFLLWFYCFAWLCFPVSLG), serve as a signal peptide directing secretion. Positions 25–320 (SQASGGDAQI…GRSSHHRHRR (296 aa)) are excised as a propeptide. 5 N-linked (GlcNAc...) asparagine glycosylation sites follow: asparagine 106, asparagine 163, asparagine 236, asparagine 255, and asparagine 269. Residues 305–328 (EDAAEDGRSSHHRHRRGQETVSSE) are disordered. Residue asparagine 339 is glycosylated (N-linked (GlcNAc...) asparagine). Intrachain disulfides connect cysteine 354–cysteine 420, cysteine 383–cysteine 452, and cysteine 387–cysteine 454.

It belongs to the TGF-beta family. Homodimer or heterodimer (Potential). But, in contrast to other members of this family, cannot be disulfide-linked. Phosphorylated; phosphorylation is critical for GDF9 function.

It is found in the secreted. Required for ovarian folliculogenesis. The chain is Growth/differentiation factor 9 (GDF9) from Papio anubis (Olive baboon).